The following is a 557-amino-acid chain: Warthog protein 4 (557 aa).

Residues 1-20 form the signal peptide; the sequence is MRFSLLALVLLSSSYKFTYG. The interval 272-308 is disordered; that stretch reads QETNPQPPPPPGQQGGFVQPQGFQPQGGFQPQGFQPQ. Residues 287–308 show a composition bias toward low complexity; sequence GFVQPQGFQPQGGFQPQGFQPQ.

Belongs to the hedgehog family. In terms of processing, the C-terminal domain displays an autoproteolysis activity.

It is found in the secreted. The protein resides in the cell surface. It localises to the cell membrane. The protein localises to the extracellular space. Functionally, intercellular signal essential for a variety of patterning events during development. This chain is Warthog protein 4 (wrt-4), found in Caenorhabditis elegans.